Here is a 932-residue protein sequence, read N- to C-terminus: Isoleucine--tRNA ligase (932 aa).

Residues 58–68 carry the 'HIGH' region motif; sequence PYANGNLHLGH. Glu567 lines the L-isoleucyl-5'-AMP pocket. The 'KMSKS' region signature appears at 608–612; the sequence is KMSKS. Lys611 contributes to the ATP binding site. The Zn(2+) site is built by Cys895, Cys898, Cys915, and Cys918.

It belongs to the class-I aminoacyl-tRNA synthetase family. IleS type 1 subfamily. Monomer. Zn(2+) serves as cofactor.

The protein localises to the cytoplasm. The catalysed reaction is tRNA(Ile) + L-isoleucine + ATP = L-isoleucyl-tRNA(Ile) + AMP + diphosphate. In terms of biological role, catalyzes the attachment of isoleucine to tRNA(Ile). As IleRS can inadvertently accommodate and process structurally similar amino acids such as valine, to avoid such errors it has two additional distinct tRNA(Ile)-dependent editing activities. One activity is designated as 'pretransfer' editing and involves the hydrolysis of activated Val-AMP. The other activity is designated 'posttransfer' editing and involves deacylation of mischarged Val-tRNA(Ile). The polypeptide is Isoleucine--tRNA ligase (Azoarcus sp. (strain BH72)).